The sequence spans 820 residues: Probable beta-glucosidase ARB_05654 (820 aa).

Residues 1 to 18 form the signal peptide; the sequence is MLFRWCPLVALAIASGTA. Asparagine 62 and asparagine 276 each carry an N-linked (GlcNAc...) asparagine glycan. The active site involves aspartate 304. N-linked (GlcNAc...) asparagine glycans are attached at residues asparagine 339, asparagine 346, asparagine 465, asparagine 547, asparagine 566, asparagine 588, and asparagine 811.

This sequence belongs to the glycosyl hydrolase 3 family.

It is found in the secreted. The enzyme catalyses Hydrolysis of terminal, non-reducing beta-D-glucosyl residues with release of beta-D-glucose.. It participates in glycan metabolism; cellulose degradation. Its function is as follows. Beta-glucosidases are one of a number of cellulolytic enzymes involved in the degradation of cellulosic biomass. Catalyzes the last step releasing glucose from the inhibitory cellobiose. In Arthroderma benhamiae (strain ATCC MYA-4681 / CBS 112371) (Trichophyton mentagrophytes), this protein is Probable beta-glucosidase ARB_05654.